We begin with the raw amino-acid sequence, 129 residues long: Small ribosomal subunit protein uS9 (129 aa).

The protein belongs to the universal ribosomal protein uS9 family.

The sequence is that of Small ribosomal subunit protein uS9 from Wolinella succinogenes (strain ATCC 29543 / DSM 1740 / CCUG 13145 / JCM 31913 / LMG 7466 / NCTC 11488 / FDC 602W) (Vibrio succinogenes).